Reading from the N-terminus, the 267-residue chain is tRNA pseudouridine synthase A (267 aa).

The active-site Nucleophile is the Asp55. Tyr111 lines the substrate pocket.

The protein belongs to the tRNA pseudouridine synthase TruA family.

It catalyses the reaction uridine(38/39/40) in tRNA = pseudouridine(38/39/40) in tRNA. In terms of biological role, formation of pseudouridine at positions 38, 39 and 40 in the anticodon stem and loop of transfer RNAs. This Thermococcus kodakarensis (strain ATCC BAA-918 / JCM 12380 / KOD1) (Pyrococcus kodakaraensis (strain KOD1)) protein is tRNA pseudouridine synthase A.